Here is a 521-residue protein sequence, read N- to C-terminus: Leucine-rich repeat-containing protein 24 (521 aa).

The first 23 residues, 1–23 (MALRAPTLLLLLLGLLLLPLLPG), serve as a signal peptide directing secretion. The LRRNT domain occupies 24 to 58 (LPPRATGCPAACRCYSATVECGALRLRVVPPGIPP). LRR repeat units follow at residues 59–80 (GTQT…SLAP), 83–104 (ALRH…AFRA), 107–128 (RLLE…AFVG), 131–152 (QLRV…TFLH), 155–176 (RLQE…ALAG), and 179–200 (SLAL…ALQP). Asn-91 carries N-linked (GlcNAc...) asparagine glycosylation. An LRRCT domain is found at 212–267 (NPWRCDCALHWLGSWIKEGGRRLLSSRDKKITCAEPPRLALQSLLEVSGGSLICIP). One can recognise an Ig-like C2-type domain in the interval 268–371 (PSVNVEPPEF…ARVPFHLLVN (104 aa)). A disulfide bond links Cys-289 and Cys-353. Residues 306–330 (QPRDGKPQAQAQLEGGAPGLGGHGT) form a disordered region. Residues Asn-342 and Asn-371 are each glycosylated (N-linked (GlcNAc...) asparagine). The tract at residues 374-395 (RQQSQQLPDPQAPATRPVGHEP) is disordered. Residues 414–434 (AITAAIALLALTALLLAAMIC) form a helical membrane-spanning segment.

Its subcellular location is the membrane. The sequence is that of Leucine-rich repeat-containing protein 24 (Lrrc24) from Mus musculus (Mouse).